The sequence spans 307 residues: Ribosomal RNA small subunit methyltransferase H (307 aa).

Residues 32 to 34 (AGH), D51, I82, D99, and Q106 each bind S-adenosyl-L-methionine.

The protein belongs to the methyltransferase superfamily. RsmH family.

Its subcellular location is the cytoplasm. The enzyme catalyses cytidine(1402) in 16S rRNA + S-adenosyl-L-methionine = N(4)-methylcytidine(1402) in 16S rRNA + S-adenosyl-L-homocysteine + H(+). Specifically methylates the N4 position of cytidine in position 1402 (C1402) of 16S rRNA. The protein is Ribosomal RNA small subunit methyltransferase H of Campylobacter concisus (strain 13826).